A 439-amino-acid polypeptide reads, in one-letter code: Protease Do-like 1, chloroplastic (439 aa).

The serine protease stretch occupies residues 154–323 (QGSGSGFVWD…IPVDTVGGIV (170 aa)). Catalysis depends on charge relay system residues His-173, Asp-203, and Ser-282. A PDZ domain is found at 326–423 (LVRFGKVTRP…EVTVEVLRGD (98 aa)).

It belongs to the peptidase S1C family. Interacts with PTAC16 and other potential targets for degradation under high light conditions.

Its subcellular location is the plastid. The protein localises to the chloroplast thylakoid membrane. Its activity is regulated as follows. Inhibited by phenylmethylsulfonyl fluoride and O-phenanthroline. In terms of biological role, serine protease that is required at high temperature. May be involved in the degradation of damaged proteins. In vivo, can degrade beta-casein. The polypeptide is Protease Do-like 1, chloroplastic (DEGP1) (Arabidopsis thaliana (Mouse-ear cress)).